Consider the following 122-residue polypeptide: MSLEEKVKNDKKQQVHTILKLMSTTINYISHPSITKSLECNLNCKSLFQLFKNLNINSFLNIKFEQKNDILIFKDTEALKVLYVLIVIINESDHPLYPCYLEWIKENAWMEESMKLFTLIKY.

This sequence belongs to the IIV-6 115R family.

This is an uncharacterized protein from Acheta domesticus (House cricket).